The sequence spans 602 residues: Elongation factor 4 (602 aa).

A tr-type G domain is found at 7–189 (DKIRNFSIVA…AIVTRLPPPK (183 aa)). Residues 19–24 (DHGKST) and 136–139 (NKVD) each bind GTP.

The protein belongs to the TRAFAC class translation factor GTPase superfamily. Classic translation factor GTPase family. LepA subfamily.

It localises to the cell inner membrane. It carries out the reaction GTP + H2O = GDP + phosphate + H(+). Required for accurate and efficient protein synthesis under certain stress conditions. May act as a fidelity factor of the translation reaction, by catalyzing a one-codon backward translocation of tRNAs on improperly translocated ribosomes. Back-translocation proceeds from a post-translocation (POST) complex to a pre-translocation (PRE) complex, thus giving elongation factor G a second chance to translocate the tRNAs correctly. Binds to ribosomes in a GTP-dependent manner. The polypeptide is Elongation factor 4 (Caulobacter vibrioides (strain NA1000 / CB15N) (Caulobacter crescentus)).